A 430-amino-acid chain; its full sequence is Adenylosuccinate synthetase (430 aa).

Residues 12 to 18 (GDEGKGK) and 40 to 42 (GHT) each bind GTP. Residue Asp-13 is the Proton acceptor of the active site. Mg(2+) is bound by residues Asp-13 and Gly-40. Residues 13–16 (DEGK), 38–41 (NAGH), Thr-130, Arg-144, Gln-224, Thr-239, and Arg-303 each bind IMP. His-41 acts as the Proton donor in catalysis. Residue 299-305 (TVTGRKR) participates in substrate binding. Residues Arg-305, 331 to 333 (KLD), and 413 to 415 (STS) each bind GTP.

The protein belongs to the adenylosuccinate synthetase family. Homodimer. Requires Mg(2+) as cofactor.

The protein resides in the cytoplasm. The enzyme catalyses IMP + L-aspartate + GTP = N(6)-(1,2-dicarboxyethyl)-AMP + GDP + phosphate + 2 H(+). It participates in purine metabolism; AMP biosynthesis via de novo pathway; AMP from IMP: step 1/2. Plays an important role in the de novo pathway of purine nucleotide biosynthesis. Catalyzes the first committed step in the biosynthesis of AMP from IMP. The sequence is that of Adenylosuccinate synthetase from Cereibacter sphaeroides (strain ATCC 17029 / ATH 2.4.9) (Rhodobacter sphaeroides).